A 227-amino-acid chain; its full sequence is Cytochrome c oxidase subunit 2 (227 aa).

The Mitochondrial intermembrane portion of the chain corresponds to 1–14 (MAYPMQLGLQDATS). The chain crosses the membrane as a helical span at residues 15-45 (PIMEELLHFHDHTLMIVFLISSLVLYIISLM). The Mitochondrial matrix segment spans residues 46–59 (LTTKLTHTSTMDAQ). The helical transmembrane segment at 60 to 87 (EVETIWTILPAIILIMIALPSLRILYMM) threads the bilayer. Topologically, residues 88–227 (DEINNPSLTV…HFEKWSASML (140 aa)) are mitochondrial intermembrane. The Cu cation site is built by H161, C196, E198, C200, H204, and M207. E198 serves as a coordination point for Mg(2+).

It belongs to the cytochrome c oxidase subunit 2 family. In terms of assembly, component of the cytochrome c oxidase (complex IV, CIV), a multisubunit enzyme composed of 14 subunits. The complex is composed of a catalytic core of 3 subunits MT-CO1, MT-CO2 and MT-CO3, encoded in the mitochondrial DNA, and 11 supernumerary subunits COX4I, COX5A, COX5B, COX6A, COX6B, COX6C, COX7A, COX7B, COX7C, COX8 and NDUFA4, which are encoded in the nuclear genome. The complex exists as a monomer or a dimer and forms supercomplexes (SCs) in the inner mitochondrial membrane with NADH-ubiquinone oxidoreductase (complex I, CI) and ubiquinol-cytochrome c oxidoreductase (cytochrome b-c1 complex, complex III, CIII), resulting in different assemblies (supercomplex SCI(1)III(2)IV(1) and megacomplex MCI(2)III(2)IV(2)). Found in a complex with TMEM177, COA6, COX18, COX20, SCO1 and SCO2. Interacts with TMEM177 in a COX20-dependent manner. Interacts with COX20. Interacts with COX16. Requires Cu cation as cofactor.

It is found in the mitochondrion inner membrane. The catalysed reaction is 4 Fe(II)-[cytochrome c] + O2 + 8 H(+)(in) = 4 Fe(III)-[cytochrome c] + 2 H2O + 4 H(+)(out). In terms of biological role, component of the cytochrome c oxidase, the last enzyme in the mitochondrial electron transport chain which drives oxidative phosphorylation. The respiratory chain contains 3 multisubunit complexes succinate dehydrogenase (complex II, CII), ubiquinol-cytochrome c oxidoreductase (cytochrome b-c1 complex, complex III, CIII) and cytochrome c oxidase (complex IV, CIV), that cooperate to transfer electrons derived from NADH and succinate to molecular oxygen, creating an electrochemical gradient over the inner membrane that drives transmembrane transport and the ATP synthase. Cytochrome c oxidase is the component of the respiratory chain that catalyzes the reduction of oxygen to water. Electrons originating from reduced cytochrome c in the intermembrane space (IMS) are transferred via the dinuclear copper A center (CU(A)) of subunit 2 and heme A of subunit 1 to the active site in subunit 1, a binuclear center (BNC) formed by heme A3 and copper B (CU(B)). The BNC reduces molecular oxygen to 2 water molecules using 4 electrons from cytochrome c in the IMS and 4 protons from the mitochondrial matrix. The polypeptide is Cytochrome c oxidase subunit 2 (MT-CO2) (Damaliscus pygargus phillipsi (Blesbok)).